A 172-amino-acid chain; its full sequence is Cytochrome b6-f complex iron-sulfur subunit (172 aa).

A helical transmembrane segment spans residues 19-39; it reads LNALLSGSVGVVVVGALYPVV. Positions 61–161 constitute a Rieske domain; that stretch reads GKPISVSELL…ATVDGDNVRF (101 aa). [2Fe-2S] cluster contacts are provided by C107, H109, C125, and H128. C112 and C127 are joined by a disulfide.

This sequence belongs to the Rieske iron-sulfur protein family. In terms of assembly, the 4 large subunits of the cytochrome b6-f complex are cytochrome b6, subunit IV (17 kDa polypeptide, PetD), cytochrome f and the Rieske protein, while the 4 small subunits are PetG, PetL, PetM and PetN. The complex functions as a dimer. The cofactor is [2Fe-2S] cluster.

The protein localises to the cellular thylakoid membrane. It carries out the reaction 2 oxidized [plastocyanin] + a plastoquinol + 2 H(+)(in) = 2 reduced [plastocyanin] + a plastoquinone + 4 H(+)(out). In terms of biological role, component of the cytochrome b6-f complex, which mediates electron transfer between photosystem II (PSII) and photosystem I (PSI), cyclic electron flow around PSI, and state transitions. This Synechococcus sp. (strain JA-2-3B'a(2-13)) (Cyanobacteria bacterium Yellowstone B-Prime) protein is Cytochrome b6-f complex iron-sulfur subunit.